The primary structure comprises 257 residues: uncharacterized protein (257 aa).

The NAD(+) site is built by Asp-34, Asp-60, Val-61, Asn-87, Tyr-152, and Lys-156. The active-site Proton acceptor is Tyr-152.

The protein belongs to the short-chain dehydrogenases/reductases (SDR) family.

This is an uncharacterized protein from Bacillus subtilis (strain 168).